We begin with the raw amino-acid sequence, 201 residues long: dCTP deaminase, dUMP-forming (201 aa).

DCTP-binding positions include 101-106, Asp-119, 127-129, Gln-148, Tyr-162, and Gln-174; these read KSSLGR and TLE. Glu-129 serves as the catalytic Proton donor/acceptor.

It belongs to the dCTP deaminase family. As to quaternary structure, homotrimer.

It catalyses the reaction dCTP + 2 H2O = dUMP + NH4(+) + diphosphate. It functions in the pathway pyrimidine metabolism; dUMP biosynthesis; dUMP from dCTP: step 1/1. Functionally, bifunctional enzyme that catalyzes both the deamination of dCTP to dUTP and the hydrolysis of dUTP to dUMP without releasing the toxic dUTP intermediate. The protein is dCTP deaminase, dUMP-forming of Clavibacter michiganensis subsp. michiganensis (strain NCPPB 382).